Consider the following 496-residue polypeptide: Maturase K (496 aa).

Belongs to the intron maturase 2 family. MatK subfamily.

It localises to the plastid. The protein localises to the chloroplast. In terms of biological role, usually encoded in the trnK tRNA gene intron. Probably assists in splicing its own and other chloroplast group II introns. In Paeonia peregrina (Common peony), this protein is Maturase K.